Here is a 74-residue protein sequence, read N- to C-terminus: Histone H1.C8/H1.M1 (74 aa).

The segment at 1–74 (MSDAAVPPKK…KAVKKAPKKK (74 aa)) is disordered. Positions 11 to 74 (ASPKKAAAKK…KAVKKAPKKK (64 aa)) are enriched in basic residues.

Its subcellular location is the nucleus. It localises to the chromosome. This is Histone H1.C8/H1.M1 from Trypanosoma cruzi.